The primary structure comprises 217 residues: Octanoyltransferase (217 aa).

Positions 32–207 (SESHDELWIV…TFSQLLGYQH (176 aa)) constitute a BPL/LPL catalytic domain. Substrate is bound by residues 71–78 (RGGQVTYH), 138–140 (SLG), and 151–153 (GLA). Residue cysteine 169 is the Acyl-thioester intermediate of the active site.

This sequence belongs to the LipB family.

The protein resides in the cytoplasm. The enzyme catalyses octanoyl-[ACP] + L-lysyl-[protein] = N(6)-octanoyl-L-lysyl-[protein] + holo-[ACP] + H(+). The protein operates within protein modification; protein lipoylation via endogenous pathway; protein N(6)-(lipoyl)lysine from octanoyl-[acyl-carrier-protein]: step 1/2. Its function is as follows. Catalyzes the transfer of endogenously produced octanoic acid from octanoyl-acyl-carrier-protein onto the lipoyl domains of lipoate-dependent enzymes. Lipoyl-ACP can also act as a substrate although octanoyl-ACP is likely to be the physiological substrate. The protein is Octanoyltransferase of Shewanella baltica (strain OS223).